A 689-amino-acid chain; its full sequence is Outer spore wall assembly protein SHE10 (689 aa).

Positions 1 to 18 (MKILTKFFLLLVVTTCSL) are cleaved as a signal peptide. The segment at 259–308 (TKAKSKSKPRVNASASARGNARAGAKAGAKAGTSEISASATADPTTSASA) is disordered. The segment covering 270–308 (NASASARGNARAGAKAGAKAGTSEISASATADPTTSASA) has biased composition (low complexity). Residues 406-435 (NKTKTVSEVLQNRYKNLNRAIQDINCTCET) are a coiled coil. The span at 610 to 626 (EQESKQREDSPRMDRDS) shows a compositional bias: basic and acidic residues. Positions 610–689 (EQESKQREDS…TVQNNVTLQI (80 aa)) are disordered. 3 stretches are compositionally biased toward polar residues: residues 627–637 (TQNVENSNTTT), 655–670 (QNGT…GPDS), and 677–689 (METT…TLQI).

The protein belongs to the SHE10 family. In terms of assembly, component of the mitochondria-localized RNase mitochondrial RNA-processing (RNase MRP) composed of one single RNA encoded by the NME1 gene and at least 31 proteins. Absent in the nucleus-localized RNase MRP (NuMRP).

It is found in the mitochondrion. In terms of biological role, involved in spore wall assembly. May be a component of the mitochondrial RNase MRP (MtMRP), a ribonucleoprotein endoribonuclease involved in the cleaving RNA transcripts to generate primers for DNA replication in mitochondria. This chain is Outer spore wall assembly protein SHE10, found in Zygosaccharomyces rouxii (strain ATCC 2623 / CBS 732 / NBRC 1130 / NCYC 568 / NRRL Y-229).